The primary structure comprises 165 residues: Endoribonuclease YbeY (165 aa).

Residues histidine 130, histidine 134, and histidine 140 each contribute to the Zn(2+) site.

This sequence belongs to the endoribonuclease YbeY family. The cofactor is Zn(2+).

The protein resides in the cytoplasm. Functionally, single strand-specific metallo-endoribonuclease involved in late-stage 70S ribosome quality control and in maturation of the 3' terminus of the 16S rRNA. This chain is Endoribonuclease YbeY, found in Streptococcus pyogenes serotype M28 (strain MGAS6180).